The primary structure comprises 706 residues: Ribosomal RNA large subunit methyltransferase K/L (706 aa).

The 112-residue stretch at Leu-43–Leu-154 folds into the THUMP domain.

Belongs to the methyltransferase superfamily. RlmKL family.

The protein resides in the cytoplasm. It catalyses the reaction guanosine(2445) in 23S rRNA + S-adenosyl-L-methionine = N(2)-methylguanosine(2445) in 23S rRNA + S-adenosyl-L-homocysteine + H(+). It carries out the reaction guanosine(2069) in 23S rRNA + S-adenosyl-L-methionine = N(2)-methylguanosine(2069) in 23S rRNA + S-adenosyl-L-homocysteine + H(+). Functionally, specifically methylates the guanine in position 2445 (m2G2445) and the guanine in position 2069 (m7G2069) of 23S rRNA. The sequence is that of Ribosomal RNA large subunit methyltransferase K/L from Yersinia pseudotuberculosis serotype IB (strain PB1/+).